A 103-amino-acid chain; its full sequence is Trp operon repressor homolog (103 aa).

Residues 62-85 mediate DNA binding; the sequence is QRKISELLGVGVATITRGSNELKH.

The protein belongs to the TrpR family. In terms of assembly, homodimer.

The protein localises to the cytoplasm. Functionally, this protein is an aporepressor. When complexed with L-tryptophan it binds the operator region of the trp operon and prevents the initiation of transcription. The protein is Trp operon repressor homolog of Photobacterium profundum (strain SS9).